Reading from the N-terminus, the 263-residue chain is Chymotrypsinogen B (263 aa).

The first 18 residues, 1–18, serve as a signal peptide directing secretion; sequence MAFLWLVSCFALVGATFG. 5 cysteine pairs are disulfide-bonded: Cys-19–Cys-140, Cys-60–Cys-76, Cys-154–Cys-219, Cys-186–Cys-200, and Cys-209–Cys-238. Positions 34-261 constitute a Peptidase S1 domain; it reads IVNGEDAIPG…LMPWVQEILE (228 aa). The active-site Charge relay system is His-75. Ser-93 carries the phosphoserine modification. The Charge relay system role is filled by Asp-120. Ser-213 acts as the Charge relay system in catalysis.

It belongs to the peptidase S1 family.

It is found in the secreted. Its subcellular location is the extracellular space. The enzyme catalyses Preferential cleavage: Tyr-|-Xaa, Trp-|-Xaa, Phe-|-Xaa, Leu-|-Xaa.. The polypeptide is Chymotrypsinogen B (Ctrb1) (Mus musculus (Mouse)).